The following is a 283-amino-acid chain: Phosphate import ATP-binding protein PstB (283 aa).

The segment covering 1–20 has biased composition (polar residues); that stretch reads MAQTLAQTKQISQSHTFDVS. Positions 1–32 are disordered; the sequence is MAQTLAQTKQISQSHTFDVSQSHHKTPDDTNS. The region spanning 37 to 278 is the ABC transporter domain; it reads YSTQNLDLWY…PSNKKTEDYI (242 aa). Residue 69-76 coordinates ATP; that stretch reads GPSGCGKS.

It belongs to the ABC transporter superfamily. Phosphate importer (TC 3.A.1.7) family. As to quaternary structure, the complex is composed of two ATP-binding proteins (PstB), two transmembrane proteins (PstC and PstA) and a solute-binding protein (PstS).

It is found in the cell membrane. The enzyme catalyses phosphate(out) + ATP + H2O = ADP + 2 phosphate(in) + H(+). Functionally, part of the ABC transporter complex PstSACB involved in phosphate import. Responsible for energy coupling to the transport system. The protein is Phosphate import ATP-binding protein PstB of Staphylococcus aureus (strain MRSA252).